Reading from the N-terminus, the 647-residue chain is DNA mismatch repair protein MutL (647 aa).

The disordered stretch occupies residues glutamate 377–tryptophan 396. A compositionally biased stretch (low complexity) spans glutamine 387–tryptophan 396.

It belongs to the DNA mismatch repair MutL/HexB family.

This protein is involved in the repair of mismatches in DNA. It is required for dam-dependent methyl-directed DNA mismatch repair. May act as a 'molecular matchmaker', a protein that promotes the formation of a stable complex between two or more DNA-binding proteins in an ATP-dependent manner without itself being part of a final effector complex. This chain is DNA mismatch repair protein MutL, found in Bacillus cereus (strain AH187).